The chain runs to 373 residues: Indole glucosinolate O-methyltransferase 1 (373 aa).

The S-adenosyl-L-homocysteine site is built by Gly217, Asp240, Asp260, Met261, and Lys274. The active-site Proton acceptor is the His278.

This sequence belongs to the class I-like SAM-binding methyltransferase superfamily. Cation-independent O-methyltransferase family. Interacts with B'GAMMA.

The protein operates within secondary metabolite biosynthesis. Involved in indole glucosinolate biosynthesis. Catalyzes methoxylation reactions of the glucosinolate indole ring. Converts the hydroxy intermediates 4-hydroxy-indol-3-yl-methylglucosinolate (4OH-I3M) and 1-hydroxy-indol-3-yl-methylglucosinolate (1OH-I3M) to 4-methoxy-indol-3-yl-methylglucosinolate (4MO-I3M) and 1-methoxy-indol-3-yl-methylglucosinolate (1MO-I3M), respectively. In Arabidopsis thaliana (Mouse-ear cress), this protein is Indole glucosinolate O-methyltransferase 1.